Consider the following 862-residue polypeptide: Active breakpoint cluster region-related protein (862 aa).

Positions Asp-30–Glu-84 are disordered. Residues Asn-34–Ser-44 are compositionally biased toward basic and acidic residues. The segment covering Pro-54 to Ser-67 has biased composition (polar residues). Residues Met-93–Asp-286 enclose the DH domain. The 160-residue stretch at Gln-303–Lys-462 folds into the PH domain. The C2 domain maps to Val-488–Ile-616. In terms of domain architecture, Rho-GAP spans Val-650–Phe-848.

It is found in the cell projection. The protein resides in the dendritic spine. The protein localises to the axon. It localises to the synapse. Protein with a unique structure having two opposing regulatory activities toward small GTP-binding proteins. The C-terminus is a GTPase-activating protein domain which stimulates GTP hydrolysis by RAC1, RAC2 and CDC42. Accelerates the intrinsic rate of GTP hydrolysis of RAC1 or CDC42, leading to down-regulation of the active GTP-bound form. The central Dbl homology (DH) domain functions as guanine nucleotide exchange factor (GEF) that modulates the GTPases CDC42, RHOA and RAC1. Promotes the conversion of CDC42, RHOA and RAC1 from the GDP-bound to the GTP-bound form. This chain is Active breakpoint cluster region-related protein (abr), found in Xenopus tropicalis (Western clawed frog).